Here is a 1174-residue protein sequence, read N- to C-terminus: Lysylphosphatidylglycerol biosynthesis bifunctional protein LysX (1174 aa).

The interval 1–665 is phosphatidylglycerol lysyltransferase; it reads MGVGLHLTVP…LLHHDGSAPD (665 aa). The tract at residues 9 to 36 is disordered; the sequence is VPGLRRDGRGVQSNSHDTSSKTTADISR. The segment covering 19-33 has biased composition (polar residues); the sequence is VQSNSHDTSSKTTAD. Helical transmembrane passes span 82–102, 124–144, 148–168, 179–199, 216–236, 274–294, and 614–634; these read VPAAAGWTVGVIATLSLLASV, FPDTNFAWSFVLALLAAALTA, IAWLVLLANMVLAAVVNAAEI, FGENLGFAVHVVAIVVLVLGY, AVWLAGAVVGIVASWGLVELF, AIFGLFGAFALIGAAIVLFLS, and VIPRVGVASVIAEGFLVLPFS. Residues 666-1174 form a lysine--tRNA ligase region; that stretch reads VSGLRQVGLT…TLPFPLAKPH (509 aa). Residues 728–806 constitute a DNA-binding region (OB); that stretch reads VSVSGRIMRI…SLIVSGWRLI (79 aa). Mg(2+) contacts are provided by D1086 and E1093.

In the N-terminal section; belongs to the LPG synthetase family. This sequence in the C-terminal section; belongs to the class-II aminoacyl-tRNA synthetase family. Mg(2+) is required as a cofactor.

It is found in the cell membrane. The catalysed reaction is tRNA(Lys) + L-lysine + ATP = L-lysyl-tRNA(Lys) + AMP + diphosphate. The enzyme catalyses L-lysyl-tRNA(Lys) + a 1,2-diacyl-sn-glycero-3-phospho-(1'-sn-glycerol) = a 1,2-diacyl-sn-glycero-3-phospho-1'-(3'-O-L-lysyl)-sn-glycerol + tRNA(Lys). In terms of biological role, catalyzes the production of L-lysyl-tRNA(Lys)transfer and the transfer of a lysyl group from L-lysyl-tRNA(Lys) to membrane-bound phosphatidylglycerol (PG), which produces lysylphosphatidylglycerol (LPG), one of the components of the bacterial membrane with a positive net charge. LPG synthesis contributes to the resistance to cationic antimicrobial peptides (CAMPs) and likely protects M.tuberculosis against the CAMPs produced by competiting microorganisms (bacteriocins). In fact, the modification of anionic phosphatidylglycerol with positively charged L-lysine results in repulsion of the peptides. The chain is Lysylphosphatidylglycerol biosynthesis bifunctional protein LysX (lysX) from Mycobacterium tuberculosis (strain KZN 1435 / MDR).